Consider the following 129-residue polypeptide: Modulator protein MzrA (129 aa).

Residues 1-14 (MINFRGRFGRPLWH) are Cytoplasmic-facing. The helical transmembrane segment at 15 to 35 (YLVLPVVLLLLAVILLTPMIV) threads the bilayer. Over 36-129 (QTESTLKIRP…VFRSNQQNLG (94 aa)) the chain is Periplasmic.

The protein belongs to the MzrA family. In terms of assembly, interacts with EnvZ.

Its subcellular location is the cell inner membrane. Functionally, modulates the activity of the EnvZ/OmpR two-component regulatory system, probably by directly modulating EnvZ enzymatic activity and increasing stability of phosphorylated OmpR. This is Modulator protein MzrA from Yersinia pestis (strain Pestoides F).